The following is a 397-amino-acid chain: Enoyl-[acyl-carrier-protein] reductase [NADH] (397 aa).

Residues 48-53 (GASTGY), 74-75 (FE), 111-112 (DA), and 139-140 (AA) each bind NAD(+). Y225 contributes to the substrate binding site. Y235 acts as the Proton donor in catalysis. Residues K244 and 273 to 275 (VVT) contribute to the NAD(+) site.

This sequence belongs to the TER reductase family. Monomer.

It catalyses the reaction a 2,3-saturated acyl-[ACP] + NAD(+) = a (2E)-enoyl-[ACP] + NADH + H(+). It participates in lipid metabolism; fatty acid biosynthesis. Functionally, involved in the final reduction of the elongation cycle of fatty acid synthesis (FAS II). Catalyzes the reduction of a carbon-carbon double bond in an enoyl moiety that is covalently linked to an acyl carrier protein (ACP). This is Enoyl-[acyl-carrier-protein] reductase [NADH] from Burkholderia pseudomallei (strain 1710b).